Reading from the N-terminus, the 254-residue chain is 4-hydroxy-tetrahydrodipicolinate reductase (254 aa).

NAD(+) is bound by residues 8–13 (GCSGKM), Asp35, 86–88 (CST), and 110–113 (SANM). His143 acts as the Proton donor/acceptor in catalysis. Residue His144 coordinates (S)-2,3,4,5-tetrahydrodipicolinate. The active-site Proton donor is Lys147. 153 to 154 (GT) lines the (S)-2,3,4,5-tetrahydrodipicolinate pocket.

It belongs to the DapB family.

Its subcellular location is the cytoplasm. The enzyme catalyses (S)-2,3,4,5-tetrahydrodipicolinate + NAD(+) + H2O = (2S,4S)-4-hydroxy-2,3,4,5-tetrahydrodipicolinate + NADH + H(+). It carries out the reaction (S)-2,3,4,5-tetrahydrodipicolinate + NADP(+) + H2O = (2S,4S)-4-hydroxy-2,3,4,5-tetrahydrodipicolinate + NADPH + H(+). Its pathway is amino-acid biosynthesis; L-lysine biosynthesis via DAP pathway; (S)-tetrahydrodipicolinate from L-aspartate: step 4/4. In terms of biological role, catalyzes the conversion of 4-hydroxy-tetrahydrodipicolinate (HTPA) to tetrahydrodipicolinate. The sequence is that of 4-hydroxy-tetrahydrodipicolinate reductase from Clostridium perfringens (strain 13 / Type A).